Reading from the N-terminus, the 543-residue chain is ATP synthase subunit alpha (543 aa).

174–181 is a binding site for ATP; it reads GDRQTGKT. Positions 521–543 are disordered; it reads VEKKPDVDKAAPVDQEKIVAGEK.

The protein belongs to the ATPase alpha/beta chains family. As to quaternary structure, F-type ATPases have 2 components, CF(1) - the catalytic core - and CF(0) - the membrane proton channel. CF(1) has five subunits: alpha(3), beta(3), gamma(1), delta(1), epsilon(1). CF(0) has three main subunits: a(1), b(2) and c(9-12). The alpha and beta chains form an alternating ring which encloses part of the gamma chain. CF(1) is attached to CF(0) by a central stalk formed by the gamma and epsilon chains, while a peripheral stalk is formed by the delta and b chains.

Its subcellular location is the cell membrane. The catalysed reaction is ATP + H2O + 4 H(+)(in) = ADP + phosphate + 5 H(+)(out). In terms of biological role, produces ATP from ADP in the presence of a proton gradient across the membrane. The alpha chain is a regulatory subunit. The polypeptide is ATP synthase subunit alpha (Bifidobacterium longum (strain DJO10A)).